Here is a 631-residue protein sequence, read N- to C-terminus: Nucleoside triphosphatase I (631 aa).

The Helicase ATP-binding domain maps to 42 to 204 (FLGLDSMHSL…TMLVNLLRPG (163 aa)). 55–62 (HETGVGKT) is a binding site for ATP. The short motif at 141 to 144 (DECH) is the DEXH box element. Positions 367-532 (KFIDVCLGIL…EFVQLFRVFK (166 aa)) constitute a Helicase C-terminal domain. Positions 457-524 (DIFILDMTWN…EIIQSKSKEF (68 aa)) are binding to the cap-specific mRNA (nucleoside-2'-O-)-methyltransferase.

The protein belongs to the helicase family. NPH I subfamily. Monomer. Interacts (via C-terminus) with RAP94/OPG109 (via N-terminus). Interacts with the cap-specific mRNA (nucleoside-2'-O-)-methyltransferase OPG102.

It localises to the virion. The enzyme catalyses a ribonucleoside 5'-triphosphate + H2O = a ribonucleoside 5'-diphosphate + phosphate + H(+). Its function is as follows. DNA-dependent ATPase that acts as a 5' to 3' translocase on single-stranded DNA and thereby plays a role in transcription termination of viral early genes. Uses forward translocation in concert with the viral RNA polymerase RAP94/OPG109 subunit and the capping enzyme/VTF to catalyze release of UUUUUNU-containing nascent RNA from the elongation complex. In addition, acts as a positive elongation factor to assist transcription through problematic sequences. In Variola virus (isolate Human/India/Ind3/1967) (VARV), this protein is Nucleoside triphosphatase I (OPG123).